Reading from the N-terminus, the 539-residue chain is MPIEIVCKIKFAEEDAKPKEKEAGDEQSLLGAAQGPAAPRDLATFASTSTLHGLGRACGPGPHGLRRTLWVLALLTSLAAFLYQAASLARGYLTRPHLVAMDPAAPAPVAGFPAVTLCNINRFRHSALSDADIFHLANLTGLPPKDRDGHRAAGLRYPEPDMVDILNRTGHQLADMLKSCNFSGHHCSASNFSVVYTRYGKCYTFNADPQSSLPSRAGGMGSGLEIMLDIQQEEYLPIWRETNETSFEAGIRVQIHSQEEPPYIHQLGFGVSPGFQTFVSCQKQRLTYLPQPWGNCRAESKLREPELQGYSAYSVSACRLRCEKEAVLQRCHCRMVHMPGNETICPPNIYIECADHTLDSLGGGSEGPCFCPTPCNLTRYGKEISMVKIPNRGSARYLARKYNRNETYIRENFLVLDVFFEALTSEAMEQRAAYGLSALLGDLGGQMGLFIGASILTLLEILDYIYEVSWDRLKRVWRRPKTPLRTSTGGISTLGLQELKEQSPCPNRGRAEGGGASNLLPNHHHPHGPPGSLFEDFAC.

The Cytoplasmic portion of the chain corresponds to 1-68; the sequence is MPIEIVCKIK…GPGPHGLRRT (68 aa). A helical membrane pass occupies residues 69 to 89; that stretch reads LWVLALLTSLAAFLYQAASLA. At 90 to 438 the chain is on the extracellular side; that stretch reads RGYLTRPHLV…EQRAAYGLSA (349 aa). Intrachain disulfides connect C118-C202 and C180-C187. N-linked (GlcNAc...) asparagine glycans are attached at residues N191, N243, N341, and N376. 5 disulfides stabilise this stretch: C296–C375, C318–C371, C322–C369, C331–C353, and C333–C345. Residues 439 to 459 form a helical membrane-spanning segment; that stretch reads LLGDLGGQMGLFIGASILTLL. A GAS motif; ion selectivity filter motif is present at residues 452–454; that stretch reads GAS. Topologically, residues 460-539 are cytoplasmic; that stretch reads EILDYIYEVS…PGSLFEDFAC (80 aa). A disordered region spans residues 501-531; it reads EQSPCPNRGRAEGGGASNLLPNHHHPHGPPG.

The protein belongs to the amiloride-sensitive sodium channel (TC 1.A.6) family. ASIC4 subfamily. As to quaternary structure, homotrimer. Heterotrimer; with other ASIC proteins producing functional channels. As to expression, expressed in brain, spinal cord and dorsal root ganglion (DRG). Expressed by a subset of sensory neurons in the DRG. Expressed by granule cells in the cerebellar cortex. In hippocampus, expression is detected in dentate gyrus granule cells, in pyramidal cells of CA1-CA3 subfields and in interneurons of the striatum oriens and radiatum of all subfields. In cerebral cortex expressed in small, medium and large pyramidal cells in layers 2, 3 and 5 respectively. Also expressed in striatum, globus pallidus, inferior and superior calliculi, amygdala, magnocellular preoptic nucleus, islands of Calleja and large neurons of olfactory tubercules.

The protein localises to the cell membrane. Functionally, does not exhibit measurable stand-alone pH-gated sodium channel activity but may form pH-gated heterotrimeric sodium channels. Its activity could also depend on alternative gating mechanisms. The polypeptide is Acid-sensing ion channel 4 (Rattus norvegicus (Rat)).